Reading from the N-terminus, the 38-residue chain is Phospholipase A2 2 (38 aa).

Ca(2+) contacts are provided by Y28, G30, and G32.

Belongs to the phospholipase A2 family. Group I subfamily. It depends on Ca(2+) as a cofactor. As to expression, expressed by the venom gland.

It is found in the secreted. It carries out the reaction a 1,2-diacyl-sn-glycero-3-phosphocholine + H2O = a 1-acyl-sn-glycero-3-phosphocholine + a fatty acid + H(+). Its function is as follows. Snake venom phospholipase A2 (PLA2) that inhibits neuromuscular transmission by blocking acetylcholine release from the nerve termini. PLA2 catalyzes the calcium-dependent hydrolysis of the 2-acyl groups in 3-sn-phosphoglycerides. The chain is Phospholipase A2 2 from Calliophis bivirgatus (Blue Malaysian coral snake).